The following is a 423-amino-acid chain: Calcium up-regulated protein A (423 aa).

Residues 1 to 19 (MINIEDISKSSNESEEKQL) are compositionally biased toward basic and acidic residues. The disordered stretch occupies residues 1–27 (MINIEDISKSSNESEEKQLKSTSTSSK). 2 Ricin B-type lectin domains span residues 27–147 (KPKY…WTTF) and 118–251 (QGNG…WGIN).

It belongs to the cup family.

Its subcellular location is the cytoplasm. The protein localises to the membrane. Its function is as follows. May play an important role in stabilizing and/or regulating the cell membrane during Ca(2+) stress or certain stages of development. This is Calcium up-regulated protein A (cupA) from Dictyostelium discoideum (Social amoeba).